The primary structure comprises 859 residues: Active breakpoint cluster region-related protein (859 aa).

Residues 31–84 (AEGHEEQKGPPEGSETMPYIDESPTMSPQLSARSQGGGESISPTPPEGLAPGVE) form a disordered region. Positions 54-64 (PTMSPQLSARS) are enriched in polar residues. A Phosphoserine modification is found at Ser-57. One can recognise a DH domain in the interval 91-284 (MRKLVLSGFL…QNFLSSINED (194 aa)). The PH domain maps to 301 to 459 (QLVKDGFLVE…WREAIQKLQK (159 aa)). The C2 domain occupies 484–613 (TVHNIPVTSN…ESKNWHTDVI (130 aa)). The 199-residue stretch at 647-845 (VKISVVTKRE…YYLQHPPISF (199 aa)) folds into the Rho-GAP domain.

In terms of assembly, interacts with DLG4. In terms of tissue distribution, expressed in brain, including the cortex, hippocampus, cerebellum, and brainstem, as well as the spinal cord (at protein level).

It is found in the cell projection. Its subcellular location is the dendritic spine. The protein localises to the axon. It localises to the synapse. Protein with a unique structure having two opposing regulatory activities toward small GTP-binding proteins. The C-terminus is a GTPase-activating protein domain which stimulates GTP hydrolysis by RAC1, RAC2 and CDC42. Accelerates the intrinsic rate of GTP hydrolysis of RAC1 or CDC42, leading to down-regulation of the active GTP-bound form. The central Dbl homology (DH) domain functions as guanine nucleotide exchange factor (GEF) that modulates the GTPases CDC42, RHOA and RAC1. Promotes the conversion of CDC42, RHOA and RAC1 from the GDP-bound to the GTP-bound form. Functions as an important negative regulator of neuronal RAC1 activity. Regulates macrophage functions such as CSF-1 directed motility and phagocytosis through the modulation of RAC1 activity. This chain is Active breakpoint cluster region-related protein, found in Rattus norvegicus (Rat).